A 505-amino-acid chain; its full sequence is Lysine--tRNA ligase (505 aa).

Positions 415 and 422 each coordinate Mg(2+).

Belongs to the class-II aminoacyl-tRNA synthetase family. As to quaternary structure, homodimer. Mg(2+) serves as cofactor.

It localises to the cytoplasm. The catalysed reaction is tRNA(Lys) + L-lysine + ATP = L-lysyl-tRNA(Lys) + AMP + diphosphate. This Escherichia coli O157:H7 protein is Lysine--tRNA ligase.